Consider the following 443-residue polypeptide: Transcriptional adapter 2-alpha (443 aa).

Phosphoserine is present on Ser6. A ZZ-type zinc finger spans residues 12-69; sequence SDKPPCRGCSSYLTEPYIKCAECGPPPFFLCLQCFTRGFEYKKHQSDHTYEIMTSDFP. Zn(2+) contacts are provided by Cys17, Cys20, Cys31, Cys34, Cys42, Cys45, His55, and His59. In terms of domain architecture, SANT spans 70–122; it reads VLDPSWTAQEEMALLEAVMDCGFGNWQDVANQMCTKTKEECEKHYMKHFINNP. Glycyl lysine isopeptide (Lys-Gly) (interchain with G-Cter in SUMO2) cross-links involve residues Lys132 and Lys138. In terms of domain architecture, SWIRM spans 356 to 443; the sequence is NSGRRSAPPL…LIREGYITKA (88 aa). Residues 426 to 435 mediate DNA binding; the sequence is KTRKIYDFLI.

Interacts with GCN5. Interacts with NR3C1. Associated with the P/CAF protein in the PCAF complex. Component of the PCAF complex, at least composed of TADA2L/ADA2, TADA3L/ADA3, TAF5L/PAF65-beta, TAF6L/PAF65-alpha, TAF10/TAFII30, TAF12/TAFII20, TAF9/TAFII31 and TRRAP. Component of the ADA2A-containing complex (ATAC), composed of KAT14, KAT2A, TADA2L, TADA3L, ZZ3, MBIP, WDR5, YEATS2, CCDC101 and DR1. Interacts with CCDC134.

The protein localises to the nucleus. It localises to the chromosome. Its function is as follows. Component of the ATAC complex, a complex with histone acetyltransferase activity on histones H3 and H4. Required for the function of some acidic activation domains, which activate transcription from a distant site. Binds double-stranded DNA. Binds dinucleosomes, probably at the linker region between neighboring nucleosomes. Plays a role in chromatin remodeling. May promote TP53/p53 'Lys-321' acetylation, leading to reduced TP53 stability and transcriptional activity. May also promote XRCC6 acetylation thus facilitating cell apoptosis in response to DNA damage. The polypeptide is Transcriptional adapter 2-alpha (Tada2a) (Mus musculus (Mouse)).